The sequence spans 583 residues: uncharacterized protein (583 aa).

This is an uncharacterized protein from Schizosaccharomyces pombe (strain 972 / ATCC 24843) (Fission yeast).